Consider the following 498-residue polypeptide: U4/U6 small nuclear ribonucleoprotein Prp31 (498 aa).

The interval Met-1–Asp-24 is disordered. Residues Leu-7 to Asp-24 show a composition bias toward acidic residues. Coiled coils occupy residues Glu-84 to Lys-119 and Asp-180 to Ile-214. The 119-residue stretch at Ile-214–Glu-332 folds into the Nop domain. A disordered region spans residues Pro-333–Arg-356. Residues Arg-350–Glu-363 carry the Nuclear localization signal (NLS) motif.

This sequence belongs to the PRP31 family. In terms of assembly, identified in the spliceosome B complex. Component of the U4/U6-U5 tri-snRNP complex. Component of some MLL1/MLL complex.

Its subcellular location is the nucleus. It is found in the nucleus speckle. The protein resides in the cajal body. Functionally, involved in pre-mRNA splicing as component of the spliceosome. Required for the assembly of the U4/U5/U6 tri-snRNP complex, one of the building blocks of the spliceosome. The sequence is that of U4/U6 small nuclear ribonucleoprotein Prp31 (prpf31) from Xenopus laevis (African clawed frog).